The sequence spans 298 residues: MMDSEAHEKRPPMLTSSNQDLSPHIAGVGDMKHYLCGYCAAFNNVAITYPVQKILFRQQLYGIKTRDAVLQLRKDGFRNLYRGILPPLMQKTTTLALMFGLYEDLSRLLHKHVSSAPEFATRSVAALLAGTTEAILTPFERVQTLLQDHKHHDKFTNTYQAFRALRCHGIAEYYRGMVPILFRNGFGNVLFFGLRGPIKESLPTATTYSAHLVNDFICGGVLGAVLGFLSFPINVVKARIQSQIGGPFLSLPMVFKTIWIERDRKLINLFRGAHLNYHRSLISWGIINATYEFLLKIV.

A compositionally biased stretch (basic and acidic residues) spans 1 to 11; that stretch reads MMDSEAHEKRP. The interval 1–21 is disordered; the sequence is MMDSEAHEKRPPMLTSSNQDL. Solcar repeat units lie at residues 28–108, 117–201, and 214–297; these read VGDM…LSRL, PEFA…IKES, and NDFI…LLKI. The next 6 helical transmembrane spans lie at 36-56, 85-105, 119-139, 180-200, 216-236, and 269-290; these read CGYC…KILF, LPPL…YEDL, FATR…LTPF, ILFR…PIKE, FICG…INVV, and LFRG…INAT.

The protein belongs to the mitochondrial carrier (TC 2.A.29) family.

It localises to the mitochondrion inner membrane. It catalyses the reaction NAD(+)(in) = NAD(+)(out). In terms of biological role, mitochondrial membrane carrier protein that mediates the import of NAD(+) into mitochondria. Mitochondrial NAD(+) is required for glycolysis and mitochondrial respiration. Compared to SLC25A52, SLC25A51-mediated transport is essential for the import of NAD(+) in mitochondria. The transport mechanism, uniport or antiport, its electrogenicity and substrate selectivity, remain to be elucidated. This chain is Mitochondrial nicotinamide adenine dinucleotide transporter SLC25A51, found in Mus musculus (Mouse).